The primary structure comprises 629 residues: Putrebactin synthase (629 aa).

This sequence belongs to the IucA/IucC family. Homodimer.

The catalysed reaction is 2 N-(3-carboxypropanoyl)-N-hydroxyputrescine + 2 ATP = putrebactin + 2 AMP + 2 diphosphate + 2 H(+). The enzyme catalyses 2 N-(3-carboxypropanoyl)-N-hydroxyputrescine + ATP = pre-putrebactin + AMP + diphosphate + H(+). It catalyses the reaction pre-putrebactin + ATP = putrebactin + AMP + diphosphate + H(+). It participates in siderophore biosynthesis. With respect to regulation, requires Mg(2+) for activity. Ligase involved in the biosynthesis of the siderophore putrebactin. Catalyzes the ATP-dependent head-to-tail dimerization of N-hydroxy-N-succinyl-putrescine (HSP) to give pre-putrebactin and subsequent macrocyclization of pre-putrebactin to give putrebactin. The polypeptide is Putrebactin synthase (Shewanella sp. (strain MR-4)).